A 148-amino-acid polypeptide reads, in one-letter code: Probable calcium-binding protein CML14 (148 aa).

3 EF-hand domains span residues 9–44 (DQVSSMKEAFMLFDTDGDGKIAPSELGILMRSLGGN), 80–115 (PFDRQLRDAFKVLDKEGTGFVAVADLRHILTSIGEK), and 116–148 (LQPSEFDEWIKEVDVGSDGKIRYEDFIARMVAK). Ca(2+)-binding residues include D22, D24, D26, K28, and E33.

Functionally, potential calcium sensor. The polypeptide is Probable calcium-binding protein CML14 (CML14) (Arabidopsis thaliana (Mouse-ear cress)).